The following is a 250-amino-acid chain: tRNA (guanine-N(7)-)-methyltransferase (250 aa).

Positions 86, 111, 138, and 161 each coordinate S-adenosyl-L-methionine. Residue Asp161 is part of the active site. Substrate contacts are provided by residues Lys165, Asp197, and 229–232 (TEFE).

It belongs to the class I-like SAM-binding methyltransferase superfamily. TrmB family.

The catalysed reaction is guanosine(46) in tRNA + S-adenosyl-L-methionine = N(7)-methylguanosine(46) in tRNA + S-adenosyl-L-homocysteine. It functions in the pathway tRNA modification; N(7)-methylguanine-tRNA biosynthesis. Functionally, catalyzes the formation of N(7)-methylguanine at position 46 (m7G46) in tRNA. The protein is tRNA (guanine-N(7)-)-methyltransferase of Treponema pallidum (strain Nichols).